We begin with the raw amino-acid sequence, 141 residues long: Hemoglobin subunit alpha (141 aa).

Positions 1 to 141 (VLSPADKTNV…VSTVLTSKYR (141 aa)) constitute a Globin domain. At Ser3 the chain carries Phosphoserine. Lys7 is subject to N6-succinyllysine. Thr8 is modified (phosphothreonine). Residue Lys11 is modified to N6-succinyllysine. Lys16 carries the N6-acetyllysine; alternate modification. N6-succinyllysine; alternate is present on Lys16. Residue Tyr24 is modified to Phosphotyrosine. Residue Ser35 is modified to Phosphoserine. N6-succinyllysine is present on Lys40. An O2-binding site is contributed by His58. His87 is a heme b binding site. Ser102 bears the Phosphoserine mark. Thr108 carries the post-translational modification Phosphothreonine. Residues Ser124 and Ser131 each carry the phosphoserine modification. Residues Thr134 and Thr137 each carry the phosphothreonine modification. Ser138 is subject to Phosphoserine.

This sequence belongs to the globin family. As to quaternary structure, heterotetramer of two alpha chains and two beta chains. Red blood cells.

Its function is as follows. Involved in oxygen transport from the lung to the various peripheral tissues. Hemopressin acts as an antagonist peptide of the cannabinoid receptor CNR1. Hemopressin-binding efficiently blocks cannabinoid receptor CNR1 and subsequent signaling. The protein is Hemoglobin subunit alpha (HBA) of Cynopterus sphinx (Indian short-nosed fruit bat).